Reading from the N-terminus, the 194-residue chain is Imidazoleglycerol-phosphate dehydratase (194 aa).

It belongs to the imidazoleglycerol-phosphate dehydratase family.

Its subcellular location is the cytoplasm. The catalysed reaction is D-erythro-1-(imidazol-4-yl)glycerol 3-phosphate = 3-(imidazol-4-yl)-2-oxopropyl phosphate + H2O. Its pathway is amino-acid biosynthesis; L-histidine biosynthesis; L-histidine from 5-phospho-alpha-D-ribose 1-diphosphate: step 6/9. In Bacillus licheniformis (strain ATCC 14580 / DSM 13 / JCM 2505 / CCUG 7422 / NBRC 12200 / NCIMB 9375 / NCTC 10341 / NRRL NRS-1264 / Gibson 46), this protein is Imidazoleglycerol-phosphate dehydratase.